A 377-amino-acid polypeptide reads, in one-letter code: Lipoyl synthase, mitochondrial (377 aa).

Residues Cys103, Cys108, Cys114, Cys134, Cys138, Cys141, and Ser349 each contribute to the [4Fe-4S] cluster site. The Radical SAM core domain maps to 119–338; sequence EHGTQTATIM…EERGNELGFL (220 aa).

It belongs to the radical SAM superfamily. Lipoyl synthase family. It depends on [4Fe-4S] cluster as a cofactor.

It is found in the mitochondrion. It carries out the reaction [[Fe-S] cluster scaffold protein carrying a second [4Fe-4S](2+) cluster] + N(6)-octanoyl-L-lysyl-[protein] + 2 oxidized [2Fe-2S]-[ferredoxin] + 2 S-adenosyl-L-methionine + 4 H(+) = [[Fe-S] cluster scaffold protein] + N(6)-[(R)-dihydrolipoyl]-L-lysyl-[protein] + 4 Fe(3+) + 2 hydrogen sulfide + 2 5'-deoxyadenosine + 2 L-methionine + 2 reduced [2Fe-2S]-[ferredoxin]. It functions in the pathway protein modification; protein lipoylation via endogenous pathway; protein N(6)-(lipoyl)lysine from octanoyl-[acyl-carrier-protein]: step 2/2. Its function is as follows. Catalyzes the radical-mediated insertion of two sulfur atoms into the C-6 and C-8 positions of the octanoyl moiety bound to the lipoyl domains of lipoate-dependent enzymes, thereby converting the octanoylated domains into lipoylated derivatives. This is Lipoyl synthase, mitochondrial from Drosophila sechellia (Fruit fly).